Reading from the N-terminus, the 176-residue chain is ATP synthase subunit delta (176 aa).

Belongs to the ATPase delta chain family. In terms of assembly, F-type ATPases have 2 components, F(1) - the catalytic core - and F(0) - the membrane proton channel. F(1) has five subunits: alpha(3), beta(3), gamma(1), delta(1), epsilon(1). F(0) has three main subunits: a(1), b(2) and c(10-14). The alpha and beta chains form an alternating ring which encloses part of the gamma chain. F(1) is attached to F(0) by a central stalk formed by the gamma and epsilon chains, while a peripheral stalk is formed by the delta and b chains.

The protein localises to the cell inner membrane. Its function is as follows. F(1)F(0) ATP synthase produces ATP from ADP in the presence of a proton or sodium gradient. F-type ATPases consist of two structural domains, F(1) containing the extramembraneous catalytic core and F(0) containing the membrane proton channel, linked together by a central stalk and a peripheral stalk. During catalysis, ATP synthesis in the catalytic domain of F(1) is coupled via a rotary mechanism of the central stalk subunits to proton translocation. In terms of biological role, this protein is part of the stalk that links CF(0) to CF(1). It either transmits conformational changes from CF(0) to CF(1) or is implicated in proton conduction. The chain is ATP synthase subunit delta from Campylobacter hominis (strain ATCC BAA-381 / DSM 21671 / CCUG 45161 / LMG 19568 / NCTC 13146 / CH001A).